Reading from the N-terminus, the 379-residue chain is Putative 8-amino-7-oxononanoate synthase (379 aa).

Arg-18 is a binding site for substrate. 106 to 107 (GY) contacts pyridoxal 5'-phosphate. His-130 serves as a coordination point for substrate. Residues Ser-178, 204–207 (DEAH), and 235–238 (TFGK) each bind pyridoxal 5'-phosphate. Lys-238 bears the N6-(pyridoxal phosphate)lysine mark. Thr-351 provides a ligand contact to substrate.

This sequence belongs to the class-II pyridoxal-phosphate-dependent aminotransferase family. BioF subfamily. As to quaternary structure, homodimer. Pyridoxal 5'-phosphate is required as a cofactor.

The enzyme catalyses 6-carboxyhexanoyl-[ACP] + L-alanine + H(+) = (8S)-8-amino-7-oxononanoate + holo-[ACP] + CO2. It functions in the pathway cofactor biosynthesis; biotin biosynthesis. Functionally, catalyzes the decarboxylative condensation of pimeloyl-[acyl-carrier protein] and L-alanine to produce 8-amino-7-oxononanoate (AON), [acyl-carrier protein], and carbon dioxide. This chain is Putative 8-amino-7-oxononanoate synthase (bioF), found in Haemophilus influenzae (strain 86-028NP).